The sequence spans 401 residues: G2/mitotic-specific cyclin-B1 (401 aa).

Disordered stretches follow at residues 1–30 (MALRVTRNRLASTRAEQGGKTCSVSGPTLK) and 84–103 (KVQVPAQPEPASPTPMETSG). A compositionally biased stretch (polar residues) spans 9–26 (RLASTRAEQGGKTCSVSG).

Belongs to the cyclin family. Cyclin AB subfamily. In terms of assembly, interacts with the CDK1 protein kinase to form a serine/threonine kinase holoenzyme complex also known as maturation promoting factor (MPF). The cyclin subunit imparts substrate specificity to the complex.

Its function is as follows. Essential for the control of the cell cycle at the G2/M (mitosis) transition. The sequence is that of G2/mitotic-specific cyclin-B1 (ccnb1) from Oryzias javanicus (Javanese ricefish).